Reading from the N-terminus, the 89-residue chain is Small ribosomal subunit protein uS15 (89 aa).

This sequence belongs to the universal ribosomal protein uS15 family. As to quaternary structure, part of the 30S ribosomal subunit. Forms a bridge to the 50S subunit in the 70S ribosome, contacting the 23S rRNA.

Its function is as follows. One of the primary rRNA binding proteins, it binds directly to 16S rRNA where it helps nucleate assembly of the platform of the 30S subunit by binding and bridging several RNA helices of the 16S rRNA. In terms of biological role, forms an intersubunit bridge (bridge B4) with the 23S rRNA of the 50S subunit in the ribosome. This Shewanella baltica (strain OS223) protein is Small ribosomal subunit protein uS15.